A 215-amino-acid polypeptide reads, in one-letter code: Large ribosomal subunit protein uL4 (215 aa).

The tract at residues 46-72 (TAKSKNRAEVSGGGRKPWAQKGGGRAR) is disordered. The span at 56–71 (SGGGRKPWAQKGGGRA) shows a compositional bias: gly residues.

It belongs to the universal ribosomal protein uL4 family. As to quaternary structure, part of the 50S ribosomal subunit.

In terms of biological role, one of the primary rRNA binding proteins, this protein initially binds near the 5'-end of the 23S rRNA. It is important during the early stages of 50S assembly. It makes multiple contacts with different domains of the 23S rRNA in the assembled 50S subunit and ribosome. Forms part of the polypeptide exit tunnel. The chain is Large ribosomal subunit protein uL4 from Helicobacter pylori (strain J99 / ATCC 700824) (Campylobacter pylori J99).